Consider the following 354-residue polypeptide: S-adenosylmethionine:tRNA ribosyltransferase-isomerase (354 aa).

Belongs to the QueA family. Monomer.

It is found in the cytoplasm. It carries out the reaction 7-aminomethyl-7-carbaguanosine(34) in tRNA + S-adenosyl-L-methionine = epoxyqueuosine(34) in tRNA + adenine + L-methionine + 2 H(+). It functions in the pathway tRNA modification; tRNA-queuosine biosynthesis. Functionally, transfers and isomerizes the ribose moiety from AdoMet to the 7-aminomethyl group of 7-deazaguanine (preQ1-tRNA) to give epoxyqueuosine (oQ-tRNA). The polypeptide is S-adenosylmethionine:tRNA ribosyltransferase-isomerase (Pseudomonas savastanoi pv. phaseolicola (strain 1448A / Race 6) (Pseudomonas syringae pv. phaseolicola (strain 1448A / Race 6))).